A 165-amino-acid polypeptide reads, in one-letter code: Phosphopantetheine adenylyltransferase (165 aa).

Residue threonine 10 participates in substrate binding. Residues 10 to 11 (TF) and histidine 18 each bind ATP. Residues lysine 42, leucine 75, and arginine 89 each coordinate substrate. Residues 90–92 (GVR), glutamate 100, and 125–131 (YTYVAST) each bind ATP.

This sequence belongs to the bacterial CoaD family. As to quaternary structure, homohexamer. It depends on Mg(2+) as a cofactor.

It is found in the cytoplasm. The enzyme catalyses (R)-4'-phosphopantetheine + ATP + H(+) = 3'-dephospho-CoA + diphosphate. It participates in cofactor biosynthesis; coenzyme A biosynthesis; CoA from (R)-pantothenate: step 4/5. Functionally, reversibly transfers an adenylyl group from ATP to 4'-phosphopantetheine, yielding dephospho-CoA (dPCoA) and pyrophosphate. The polypeptide is Phosphopantetheine adenylyltransferase (Chlorobaculum tepidum (strain ATCC 49652 / DSM 12025 / NBRC 103806 / TLS) (Chlorobium tepidum)).